We begin with the raw amino-acid sequence, 370 residues long: 3-hydroxy-3-methylglutaryl-CoA lyase, cytoplasmic (370 aa).

Residue G2 is the site of N-myristoyl glycine attachment. The Pyruvate carboxyltransferase domain occupies 78–345 (VKIVEVGPRD…NTGVNLYKVM (268 aa)). Position 86 (R86) interacts with substrate. A divalent metal cation contacts are provided by D87, H278, and H280. C311 is a catalytic residue. N320 contributes to the a divalent metal cation binding site.

This sequence belongs to the HMG-CoA lyase family. The cofactor is a divalent metal cation.

The protein resides in the cytoplasm. Its subcellular location is the cytosol. It is found in the endoplasmic reticulum membrane. It carries out the reaction (3S)-3-hydroxy-3-methylglutaryl-CoA = acetoacetate + acetyl-CoA. It functions in the pathway metabolic intermediate metabolism; (S)-3-hydroxy-3-methylglutaryl-CoA degradation; acetoacetate from (S)-3-hydroxy-3-methylglutaryl-CoA: step 1/1. Functionally, non-mitochondrial 3-hydroxy-3-methylglutaryl-CoA lyase that catalyzes a cation-dependent cleavage of (S)-3-hydroxy-3-methylglutaryl-CoA into acetyl-CoA and acetoacetate, a key step in ketogenesis, the products of which support energy production in nonhepatic animal tissues. The polypeptide is 3-hydroxy-3-methylglutaryl-CoA lyase, cytoplasmic (HMGCLL1) (Homo sapiens (Human)).